Here is a 223-residue protein sequence, read N- to C-terminus: UPF0319 protein VPA1584 (223 aa).

The N-terminal stretch at 1-21 (MKLIKPLTCALALAMSGMAFA) is a signal peptide.

This sequence belongs to the UPF0319 family.

In Vibrio parahaemolyticus serotype O3:K6 (strain RIMD 2210633), this protein is UPF0319 protein VPA1584.